A 142-amino-acid polypeptide reads, in one-letter code: Large ribosomal subunit protein uL11 (142 aa).

Belongs to the universal ribosomal protein uL11 family. As to quaternary structure, part of the ribosomal stalk of the 50S ribosomal subunit. Interacts with L10 and the large rRNA to form the base of the stalk. L10 forms an elongated spine to which L12 dimers bind in a sequential fashion forming a multimeric L10(L12)X complex. In terms of processing, one or more lysine residues are methylated.

Functionally, forms part of the ribosomal stalk which helps the ribosome interact with GTP-bound translation factors. This is Large ribosomal subunit protein uL11 from Yersinia pseudotuberculosis serotype O:1b (strain IP 31758).